A 282-amino-acid polypeptide reads, in one-letter code: Tetraspanin-6 (282 aa).

The Cytoplasmic segment spans residues 1 to 7 (MYRFSNT). The helical transmembrane segment at 8–28 (VIGVLNLLTLLASIPIIGTAL) threads the bilayer. Residues 29–44 (YKARSSTTCENFLQTP) lie on the Extracellular side of the membrane. A helical transmembrane segment spans residues 45–65 (LLVIGFIILIVSLAGFIGACF). Over 66–74 (NVAWALWVY) the chain is Cytoplasmic. Residues 75–95 (LVVMIFLIATLMGLTLFGLVV) form a helical membrane-spanning segment. The Extracellular portion of the chain corresponds to 96-220 (TSQGGGVEVP…EIRLDWRKLS (125 aa)). A helical membrane pass occupies residues 221–241 (VVNILVLVLLIAVYAAGCCAF). Residues 242 to 282 (HNTRHAAHPYHPSDDNRMTRVRPRWDYYWWRWWHEKKEQLY) lie on the Cytoplasmic side of the membrane.

It belongs to the tetraspanin (TM4SF) family.

It is found in the membrane. Its function is as follows. May be involved in the regulation of cell differentiation. This is Tetraspanin-6 (TET6) from Arabidopsis thaliana (Mouse-ear cress).